Reading from the N-terminus, the 776-residue chain is DNA topoisomerase 1 (776 aa).

Positions 1 to 111 constitute a Toprim domain; the sequence is MKLVIVESPA…VKSDDFFKRV (111 aa). The Mg(2+) site is built by glutamate 7 and aspartate 80. The region spanning 132–568 is the Topo IA-type catalytic domain; that stretch reads DTNLVNAQQA…FWSGFNHNIE (437 aa). Positions 166–171 are interaction with DNA; that stretch reads SAGRVQ. Residue tyrosine 304 is the O-(5'-phospho-DNA)-tyrosine intermediate of the active site. The segment at 600-627 adopts a C4-type zinc-finger fold; it reads CPSCNTGELSLKLGKFGAFLACSNYPEC.

This sequence belongs to the type IA topoisomerase family. In terms of assembly, monomer. Mg(2+) serves as cofactor.

The catalysed reaction is ATP-independent breakage of single-stranded DNA, followed by passage and rejoining.. Its function is as follows. Releases the supercoiling and torsional tension of DNA, which is introduced during the DNA replication and transcription, by transiently cleaving and rejoining one strand of the DNA duplex. Introduces a single-strand break via transesterification at a target site in duplex DNA. The scissile phosphodiester is attacked by the catalytic tyrosine of the enzyme, resulting in the formation of a DNA-(5'-phosphotyrosyl)-enzyme intermediate and the expulsion of a 3'-OH DNA strand. The free DNA strand then undergoes passage around the unbroken strand, thus removing DNA supercoils. Finally, in the religation step, the DNA 3'-OH attacks the covalent intermediate to expel the active-site tyrosine and restore the DNA phosphodiester backbone. The protein is DNA topoisomerase 1 of Rickettsia conorii (strain ATCC VR-613 / Malish 7).